Reading from the N-terminus, the 376-residue chain is MQVAIPETMKAVVIEDGKAVVKEGIPIPELEEGFVLIKTLAVAGNPTDWAHIDYKIGPQGSILGCDAAGQIVKLGPAVNPKDFSIGDYIYGFIHGSSVRFPSNGAFAEYSAISTVVAYKSPNELKFLGEDVLPAGPVRSLEGVATIPVSLTTAGLVLTYNLGLDLKWEPSTPQRKGPILLWGGATAVGQSLIQLANKLNGFTKIIVVASRKHEKLLKEYGADELFDYHDIDVVEQIKHKYNNISYLVDCVANQDTLQQVYKCAADKQDATIVELKNLTEENVKKENRRQNVTIDIIRLYSIGGHEVPFGNITLPADSEARKAAIKFIKFINPKINDGQIRHIPVRVYKNGLCDVPHILKDIKYGKNSGEKLVAVLN.

This sequence belongs to the YCR102c/YLR460c/YNL134c family.

This is an uncharacterized protein from Saccharomyces cerevisiae (strain ATCC 204508 / S288c) (Baker's yeast).